Consider the following 434-residue polypeptide: Beta-phenylalanine transaminase (434 aa).

R41 lines the (S)-3-amino-3-phenylpropanoate pocket. 132-133 contributes to the pyridoxal 5'-phosphate binding site; the sequence is GT. The residue at position 267 (K267) is an N6-(pyridoxal phosphate)lysine. T300 is a pyridoxal 5'-phosphate binding site.

The protein belongs to the class-III pyridoxal-phosphate-dependent aminotransferase family. As to quaternary structure, homodimer. The cofactor is pyridoxal 5'-phosphate.

It catalyses the reaction (S)-3-amino-3-phenylpropanoate + 2-oxoglutarate = 3-oxo-3-phenylpropanoate + L-glutamate. The catalysed reaction is (S)-3-amino-3-phenylpropanoate + pyruvate = 3-oxo-3-phenylpropanoate + L-alanine. Its activity is regulated as follows. Is inhibited by 2-aminooxyacetate (AOA), a mimic of beta-alanine and a known inhibitor of aminotransferases. Its function is as follows. Aminotransferase that acts exclusively on beta-amino acids and exhibits a broad substrate range in vitro, accepting meta-, para- and, to a lesser extent, ortho-substituted beta-phenylalanine derivatives as amino donors, and 2-oxoglutarate or pyruvate as amino acceptors. Is highly enantioselective toward (S)-beta-phenylalanine (is not active with (R)-beta-phenylalanine) and derivatives with different substituents on the phenyl ring, allowing the kinetic resolution of various racemic beta-amino acids to yield (R)-beta-amino acids with &gt;95% enantiomeric excess (ee). Highly prefers aromatic beta-amino acids over aliphatic beta-amino acids; cannot use beta-alanine or beta-glutamate as substrate. Is likely involved in the beta-phenylalanine degradation pathway that allows V.paradoxus strain CBF3 to use beta-phenylalanine as a sole nitrogen source. This chain is Beta-phenylalanine transaminase, found in Variovorax paradoxus.